Here is a 64-residue protein sequence, read N- to C-terminus: Potassium channel toxin kappa-KTx 4.1 (64 aa).

The first 26 residues, Met-1–Ala-26, serve as a signal peptide directing secretion. Positions Glu-27–Glu-38 are excised as a propeptide. Disulfide bonds link Cys-43-Cys-61 and Cys-47-Cys-57.

This sequence belongs to the short scorpion toxin superfamily. Potassium channel inhibitor kappa-KTx family. Kappa-KTx 4 subfamily. In terms of tissue distribution, expressed by the venom gland.

It is found in the secreted. In terms of biological role, potassium channel inhibitor (Kv). The polypeptide is Potassium channel toxin kappa-KTx 4.1 (Heterometrus petersii (Asian forest scorpion)).